The primary structure comprises 136 residues: Classical arabinogalactan protein 26 (136 aa).

Residues 1–21 (MSVSLFTAFTVLSLCLHTSTS) form the signal peptide. Residues 38-95 (APSSFSASTPAMSPDTSPLFPTPGSSEMSPSPSESSIMPTIPSSLSPPNPDAVTPDPL) form a disordered region. Residues 40–53 (SSFSASTPAMSPDT) show a composition bias toward polar residues. The span at 59-81 (TPGSSEMSPSPSESSIMPTIPSS) shows a compositional bias: low complexity. Residue serine 108 is the site of GPI-anchor amidated serine attachment. Positions 109–136 (SSVCLVSSQLSSLLLVLLMLLLAFCSFF) are cleaved as a propeptide — removed in mature form.

This sequence belongs to the classical AGP family. O-glycosylated on the hydroxyproline residues.

Its subcellular location is the cell membrane. Its function is as follows. Proteoglycan that seems to be implicated in diverse developmental roles such as differentiation, cell-cell recognition, embryogenesis and programmed cell death. The protein is Classical arabinogalactan protein 26 (AGP26) of Arabidopsis thaliana (Mouse-ear cress).